The sequence spans 506 residues: Arylsulfatase A (506 aa).

The first 17 residues, 1 to 17 (MALGTLFLALAAGLSTA), serve as a signal peptide directing secretion. The Ca(2+) site is built by aspartate 28, aspartate 29, and cysteine 68. Cysteine 68 acts as the Nucleophile in catalysis. Cysteine 68 carries the post-translational modification 3-oxoalanine (Cys). A substrate-binding site is contributed by lysine 122. Histidine 124 is an active-site residue. Serine 149 is a binding site for substrate. 2 disulfides stabilise this stretch: cysteine 155–cysteine 171 and cysteine 160–cysteine 167. N-linked (GlcNAc...) asparagine glycosylation is present at asparagine 157. Asparagine 183 carries an N-linked (GlcNAc...) asparagine glycan. Histidine 228 serves as a coordination point for substrate. Residues aspartate 280 and asparagine 281 each coordinate Ca(2+). Intrachain disulfides connect cysteine 299–cysteine 413, cysteine 487–cysteine 499, cysteine 488–cysteine 501, and cysteine 492–cysteine 498. Lysine 301 provides a ligand contact to substrate. An N-linked (GlcNAc...) asparagine glycan is attached at asparagine 349.

This sequence belongs to the sulfatase family. Homodimer at neutral pH and homooctamer at acidic pH. Exists both as a single chain of 58 kDa (component A) or as a chain of 50 kDa (component B) linked by disulfide bond(s) to a 7 kDa chain (component C). Interacts with SUMF1. Ca(2+) is required as a cofactor. The conversion to 3-oxoalanine (also known as C-formylglycine, FGly), of a serine or cysteine residue in prokaryotes and of a cysteine residue in eukaryotes, is critical for catalytic activity. This post-translational modification is severely defective in multiple sulfatase deficiency (MSD).

The protein localises to the endoplasmic reticulum. Its subcellular location is the lysosome. The catalysed reaction is an N-acyl-1-beta-D-(3-O-sulfo)-galactosyl-sphing-4-enine + H2O = a beta-D-galactosyl-(1&lt;-&gt;1')-N-acylsphing-4-enine + sulfate + H(+). Functionally, hydrolyzes cerebroside sulfate. The protein is Arylsulfatase A (Arsa) of Mus musculus (Mouse).